A 96-amino-acid polypeptide reads, in one-letter code: Putative pterin-4-alpha-carbinolamine dehydratase (96 aa).

It belongs to the pterin-4-alpha-carbinolamine dehydratase family.

The enzyme catalyses (4aS,6R)-4a-hydroxy-L-erythro-5,6,7,8-tetrahydrobiopterin = (6R)-L-erythro-6,7-dihydrobiopterin + H2O. The polypeptide is Putative pterin-4-alpha-carbinolamine dehydratase (Prochlorococcus marinus (strain MIT 9215)).